A 335-amino-acid chain; its full sequence is Thioredoxin reductase (335 aa).

FAD is bound by residues 22–25 (SGPA), 44–51 (EGTSFGGA), asparagine 60, and valine 93. The cysteines at positions 145 and 148 are disulfide-linked. NADP(+)-binding residues include serine 166, histidine 185, arginine 191, isoleucine 248, and tyrosine 268. Residues aspartate 288 and 295–298 (RQAV) contribute to the FAD site. NADP(+) is bound at residue arginine 295.

This sequence belongs to the class-II pyridine nucleotide-disulfide oxidoreductase family. Homodimer. The cofactor is FAD.

Its subcellular location is the cytoplasm. The enzyme catalyses [thioredoxin]-dithiol + NADP(+) = [thioredoxin]-disulfide + NADPH + H(+). The chain is Thioredoxin reductase from Mycobacterium tuberculosis (strain CDC 1551 / Oshkosh).